We begin with the raw amino-acid sequence, 131 residues long: Small ribosomal subunit protein uS8 (131 aa).

The protein belongs to the universal ribosomal protein uS8 family. As to quaternary structure, part of the 30S ribosomal subunit. Contacts proteins S5 and S12.

Its function is as follows. One of the primary rRNA binding proteins, it binds directly to 16S rRNA central domain where it helps coordinate assembly of the platform of the 30S subunit. The polypeptide is Small ribosomal subunit protein uS8 (Laribacter hongkongensis (strain HLHK9)).